Consider the following 1496-residue polypeptide: Chromosome partition protein MukB (1496 aa).

63-70 contacts ATP; the sequence is GGNGAGKS. 2 coiled-coil regions span residues 328-493 and 536-632; these read KLEL…QRLS and KMQA…APAW. Residues 694 to 811 are flexible hinge; it reads PDGSDDVRLN…EVPLFGRAAR (118 aa). Coiled coils occupy residues 861 to 1171 and 1235 to 1291; these read NPEE…SAEE and IDAI…LQNI. Positions 1082 to 1091 are enriched in basic and acidic residues; sequence RARSRRDELQ. The disordered stretch occupies residues 1082-1101; the sequence is RARSRRDELQQRLSQQRSRK.

This sequence belongs to the SMC family. MukB subfamily. As to quaternary structure, homodimerization via its hinge domain. Binds to DNA via its C-terminal region. Interacts, and probably forms a ternary complex, with MukE and MukF via its C-terminal region. The complex formation is stimulated by calcium or magnesium. Interacts with tubulin-related protein FtsZ.

Its subcellular location is the cytoplasm. The protein localises to the nucleoid. Its function is as follows. Plays a central role in chromosome condensation, segregation and cell cycle progression. Functions as a homodimer, which is essential for chromosome partition. Involved in negative DNA supercoiling in vivo, and by this means organize and compact chromosomes. May achieve or facilitate chromosome segregation by condensation DNA from both sides of a centrally located replisome during cell division. This chain is Chromosome partition protein MukB, found in Actinobacillus pleuropneumoniae serotype 7 (strain AP76).